The following is a 352-amino-acid chain: C-X-C chemokine receptor type 4 (352 aa).

Residues Met-1–Tyr-21 are important for chemokine binding and signaling. The Extracellular portion of the chain corresponds to Met-1–Lys-38. Sulfotyrosine is present on Tyr-7. A glycan (N-linked (GlcNAc...) asparagine) is linked at Asn-11. Tyr-12 is modified (sulfotyrosine). A glycan (O-linked (Xyl...) (chondroitin sulfate) serine) is linked at Ser-18. The residue at position 21 (Tyr-21) is a Sulfotyrosine. 2 cysteine pairs are disulfide-bonded: Cys-28-Cys-274 and Cys-109-Cys-186. Residues Ile-39–Met-63 form a helical membrane-spanning segment. At Gly-64–Arg-77 the chain is on the cytoplasmic side. The helical transmembrane segment at Leu-78–Val-99 threads the bilayer. A chemokine binding region spans residues Trp-94 to Asp-97. The Extracellular segment spans residues Ala-100 to Lys-110. Residues Ala-111–Ile-130 traverse the membrane as a helical segment. The interval His-113–Thr-117 is chemokine binding. The Cytoplasmic segment spans residues Ser-131–Lys-154. The Important for signaling motif lies at Asp-133–Tyr-135. The tract at residues Tyr-135–Pro-147 is involved in dimerization; when bound to chemokine. A helical membrane pass occupies residues Val-155–Phe-174. The Extracellular segment spans residues Ala-175–Trp-195. The interval Cys-186 to Tyr-190 is chemokine binding, important for signaling. Residues Pro-191–Leu-210 are involved in dimerization. The helical transmembrane segment at Val-196–Leu-216 threads the bilayer. The Cytoplasmic portion of the chain corresponds to Ser-217–Thr-241. The chain crosses the membrane as a helical span at residues Val-242–Ile-261. The Extracellular portion of the chain corresponds to Asp-262–Lys-282. The involved in dimerization stretch occupies residues Leu-266–Glu-268. A helical transmembrane segment spans residues Trp-283 to Tyr-302. Over Ala-303 to Ser-352 the chain is Cytoplasmic. A phosphoserine mark is found at Ser-319 and Ser-321. Residues Ser-324 and Ser-325 each carry the phosphoserine; by PKC and GRK6 modification. The interval Leu-329–Ser-352 is disordered. At Ser-330 the chain carries Phosphoserine; by GRK6. Lys-331 is covalently cross-linked (Glycyl lysine isopeptide (Lys-Gly) (interchain with G-Cter in ubiquitin)). The span at His-337–Ser-352 shows a compositional bias: low complexity. Ser-339 is subject to Phosphoserine; by GRK6. A phosphoserine mark is found at Ser-348 and Ser-351.

It belongs to the G-protein coupled receptor 1 family. As to quaternary structure, monomer. Can form homodimers. Interacts with CD164. Interacts with ARRB2; the interaction is dependent on the C-terminal phosphorylation of CXCR4 and allows activation of MAPK1 and MAPK3. Interacts with ARR3; the interaction is dependent on the C-terminal phosphorylation of CXCR4 and modulates calcium mobilization. Interacts with RNF113A; the interaction, enhanced by CXCL12, promotes CXCR4 ubiquitination and subsequent degradation. Interacts (via the cytoplasmic C-terminal) with ITCH (via the WW domains I and II); the interaction, enhanced by CXCL12, promotes CXCR4 ubiquitination and leads to its degradation. Interacts with extracellular ubiquitin. Interacts with DBN1; this interaction is enhanced by antigenic stimulation. Following LPS binding, may form a complex with GDF5, HSP90AA1 and HSPA8. Phosphorylated on agonist stimulation. Rapidly phosphorylated on serine and threonine residues in the C-terminal. Phosphorylation at Ser-324 and Ser-325 leads to recruitment of ITCH, ubiquitination and protein degradation. In terms of processing, ubiquitinated after ligand binding, leading to its degradation. Ubiquitinated by ITCH at the cell membrane on agonist stimulation. The ubiquitin-dependent mechanism, endosomal sorting complex required for transport (ESCRT), then targets CXCR4 for lysosomal degradation. This process is dependent also on prior Ser-/Thr-phosphorylation in the C-terminal of CXCR4. Also binding of ARRB1 to STAM negatively regulates CXCR4 sorting to lysosomes though modulating ubiquitination of SFR5S. Post-translationally, sulfation is required for efficient binding of CXCL12/SDF-1alpha and promotes its dimerization. O- and N-glycosylated. N-glycosylation can mask coreceptor function. The O-glycosylation chondroitin sulfate attachment does not affect interaction with CXCL12/SDF-1alpha nor its coreceptor activity.

It is found in the cell membrane. The protein resides in the cell junction. It localises to the early endosome. The protein localises to the late endosome. Its subcellular location is the lysosome. Its function is as follows. Receptor for the C-X-C chemokine CXCL12/SDF-1 that transduces a signal by increasing intracellular calcium ion levels and enhancing MAPK1/MAPK3 activation. Involved in the AKT signaling cascade. Plays a role in regulation of cell migration, e.g. during wound healing. Acts as a receptor for extracellular ubiquitin; leading to enhanced intracellular calcium ions and reduced cellular cAMP levels. Binds bacterial lipopolysaccharide (LPS) et mediates LPS-induced inflammatory response, including TNF secretion by monocytes. Involved in hematopoiesis and in cardiac ventricular septum formation. Also plays an essential role in vascularization of the gastrointestinal tract, probably by regulating vascular branching and/or remodeling processes in endothelial cells. Involved in cerebellar development. In the CNS, could mediate hippocampal-neuron survival. The sequence is that of C-X-C chemokine receptor type 4 (CXCR4) from Pan troglodytes (Chimpanzee).